Consider the following 246-residue polypeptide: Ribonuclease 3 (246 aa).

An RNase III domain is found at 16–144 (LLEFQKQAGL…VIGAYYIDSG (129 aa)). Glutamate 57 is a binding site for Mg(2+). Aspartate 61 is an active-site residue. Residues aspartate 130 and glutamate 133 each contribute to the Mg(2+) site. The active site involves glutamate 133. The DRBM domain occupies 171-240 (DYKSLLQELV…AKVAYENLCS (70 aa)).

Belongs to the ribonuclease III family. In terms of assembly, homodimer. The cofactor is Mg(2+).

The protein resides in the cytoplasm. The catalysed reaction is Endonucleolytic cleavage to 5'-phosphomonoester.. In terms of biological role, digests double-stranded RNA. Involved in the processing of primary rRNA transcript to yield the immediate precursors to the large and small rRNAs (23S and 16S). Processes some mRNAs, and tRNAs when they are encoded in the rRNA operon. Processes pre-crRNA and tracrRNA of type II CRISPR loci if present in the organism. This is Ribonuclease 3 from Treponema denticola (strain ATCC 35405 / DSM 14222 / CIP 103919 / JCM 8153 / KCTC 15104).